A 539-amino-acid polypeptide reads, in one-letter code: Copine-C (539 aa).

C2 domains lie at 1–120 (MIPS…KIVA) and 128–251 (VTGK…PLIN). Residues L23, D24, D30, D83, D85, and D98 each contribute to the Ca(2+) site. The VWFA domain occupies 290–507 (SLMTAIDCTG…ALAQETLKEI (218 aa)).

The protein belongs to the copine family. Requires Ca(2+) as cofactor.

This Dictyostelium discoideum (Social amoeba) protein is Copine-C (cpnC).